The following is a 965-amino-acid chain: Pullulanase 1, chloroplastic (965 aa).

A chloroplast-targeting transit peptide spans 1–62 (MALTLTPTSS…SKTSLHCLCS (62 aa)). D552 functions as the Nucleophile in the catalytic mechanism. The active-site Proton donor is the E589.

It belongs to the glycosyl hydrolase 13 family.

Its subcellular location is the plastid. It is found in the chloroplast stroma. It carries out the reaction Hydrolysis of (1-&gt;6)-alpha-D-glucosidic linkages in alpha- and beta-limit dextrins of amylopectin and glycogen, and in amylopectin and pullulan.. It functions in the pathway glycan biosynthesis; starch biosynthesis. The protein operates within glycan degradation; starch degradation. Functionally, involved in starch degradation and also probably in the trimming of pre-amylopectin chains during starch synthesis. The chain is Pullulanase 1, chloroplastic (PU1) from Arabidopsis thaliana (Mouse-ear cress).